The sequence spans 398 residues: MSEEDDHWNLVRLRRLRKGREGEEQSSKSEISLDSLHESSFAGEDDEDFDADVLSNTSSEESAQMNRIYDFRTSNEFSNAGVNIDQTGVPTISESFDTLSGSNVGGTVLPSMEGSKLKDSTIRNSSTLSDHIIDKSEGKSAKLKMWHVIMLSSLLSMTFSYLALEYSLTGDVLAGFKSQQSLRNNERKLLYGNIDFVDKKSYDSSSDSLSQWAPSGKYYVDFDNHIAYPLKDDDLMGWRRYKTDLVILWYTTKARMKDGWHKRINKINGGRIKLHLFLKNSFKSAQESLRVLHKEQKRRWKRLFVLLHNKYRQFSPHIKRYFDHSCQKAKQCWSGSRLQLRKLRFKSMKPFRVFQFKVRKDTNWFVKQLKRFGLKLQHSRMYKAMSECRKKNYFKCKH.

The ATG8-binding motif lies at 8-11 (WNLV). A disordered region spans residues 15 to 50 (RLRKGREGEEQSSKSEISLDSLHESSFAGEDDEDFD). Residues 52–59 (DVLSNTSS) carry the ATG11-binding motif. A helical transmembrane segment spans residues 148–164 (VIMLSSLLSMTFSYLAL).

In terms of assembly, interacts with ATG8 and ATG11.

It localises to the endoplasmic reticulum membrane. The protein localises to the preautophagosomal structure membrane. Its function is as follows. Acts as a receptor for reticulophagy and nucleophagy. Directs autophagic sequestration of double-membrane vesicles derived from the nuclear envelope and perinuclear endoplasmic reticulum (pnER) into autophagosomes. Is not required for the cytoplasm-to-vacuole targeting pathway, mitophagy, pexophagy, and non-selective autophagy. The polypeptide is Autophagy-related protein 39 (Saccharomyces cerevisiae (strain ATCC 204508 / S288c) (Baker's yeast)).